Here is a 364-residue protein sequence, read N- to C-terminus: Sec-independent protein translocase protein TatC (364 aa).

The next 7 membrane-spanning stretches (helical) occupy residues 42–62 (IALL…PRIF), 107–127 (MIAA…SFIT), 139–159 (LTFV…AYLT), 160–180 (LSTG…SVLD), 194–214 (IFGL…AGIV), 225–245 (PEIF…DPFT), and 246–266 (MLAL…IGWL). Positions 277-364 (TSPYADLDDD…STDVTHGDIT (88 aa)) are disordered. A compositionally biased stretch (acidic residues) spans 282-295 (DLDDDETSPLDFDD). The segment covering 301 to 320 (AASAGPAATATSPGTANPPG) has biased composition (low complexity). Positions 324 to 344 (PPGTANPVGTANPVGTGSSTP) are enriched in polar residues.

It belongs to the TatC family. In terms of assembly, the Tat system comprises two distinct complexes: a TatABC complex, containing multiple copies of TatA, TatB and TatC subunits, and a separate TatA complex, containing only TatA subunits. Substrates initially bind to the TatABC complex, which probably triggers association of the separate TatA complex to form the active translocon.

The protein resides in the cell membrane. In terms of biological role, part of the twin-arginine translocation (Tat) system that transports large folded proteins containing a characteristic twin-arginine motif in their signal peptide across membranes. Together with TatB, TatC is part of a receptor directly interacting with Tat signal peptides. The sequence is that of Sec-independent protein translocase protein TatC from Frankia casuarinae (strain DSM 45818 / CECT 9043 / HFP020203 / CcI3).